Consider the following 353-residue polypeptide: S-adenosylmethionine decarboxylase proenzyme (353 aa).

Catalysis depends on residues Glu9 and Glu12. Catalysis depends on Ser69, which acts as the Schiff-base intermediate with substrate; via pyruvic acid. At Ser69 the chain carries Pyruvic acid (Ser); by autocatalysis. Cys83 (proton donor; for catalytic activity) is an active-site residue. Active-site proton acceptor; for processing activity residues include Ser232 and His245.

Belongs to the eukaryotic AdoMetDC family. Pyruvate is required as a cofactor. Post-translationally, is synthesized initially as an inactive proenzyme. Formation of the active enzyme involves a self-maturation process in which the active site pyruvoyl group is generated from an internal serine residue via an autocatalytic post-translational modification. Two non-identical subunits are generated from the proenzyme in this reaction, and the pyruvate is formed at the N-terminus of the alpha chain, which is derived from the carboxyl end of the proenzyme. The post-translation cleavage follows an unusual pathway, termed non-hydrolytic serinolysis, in which the side chain hydroxyl group of the serine supplies its oxygen atom to form the C-terminus of the beta chain, while the remainder of the serine residue undergoes an oxidative deamination to produce ammonia and the pyruvoyl group blocking the N-terminus of the alpha chain.

It carries out the reaction S-adenosyl-L-methionine + H(+) = S-adenosyl 3-(methylsulfanyl)propylamine + CO2. The protein operates within amine and polyamine biosynthesis; S-adenosylmethioninamine biosynthesis; S-adenosylmethioninamine from S-adenosyl-L-methionine: step 1/1. In Vicia faba (Broad bean), this protein is S-adenosylmethionine decarboxylase proenzyme (SAMDC).